Here is a 319-residue protein sequence, read N- to C-terminus: Acetyl-coenzyme A carboxylase carboxyl transferase subunit alpha (319 aa).

In terms of domain architecture, CoA carboxyltransferase C-terminal spans 35 to 296 (NIDEEVHRLR…KAQLLEDLAD (262 aa)).

It belongs to the AccA family. In terms of assembly, acetyl-CoA carboxylase is a heterohexamer composed of biotin carboxyl carrier protein (AccB), biotin carboxylase (AccC) and two subunits each of ACCase subunit alpha (AccA) and ACCase subunit beta (AccD).

Its subcellular location is the cytoplasm. The enzyme catalyses N(6)-carboxybiotinyl-L-lysyl-[protein] + acetyl-CoA = N(6)-biotinyl-L-lysyl-[protein] + malonyl-CoA. It functions in the pathway lipid metabolism; malonyl-CoA biosynthesis; malonyl-CoA from acetyl-CoA: step 1/1. Component of the acetyl coenzyme A carboxylase (ACC) complex. First, biotin carboxylase catalyzes the carboxylation of biotin on its carrier protein (BCCP) and then the CO(2) group is transferred by the carboxyltransferase to acetyl-CoA to form malonyl-CoA. The polypeptide is Acetyl-coenzyme A carboxylase carboxyl transferase subunit alpha (Salmonella agona (strain SL483)).